A 508-amino-acid polypeptide reads, in one-letter code: Photosystem II CP47 reaction center protein (508 aa).

6 consecutive transmembrane segments (helical) span residues 21 to 36 (AVHI…WAGS), 101 to 115 (IVFS…TWHW), 140 to 156 (GIHL…FGAF), 203 to 218 (VAAG…FHLS), 237 to 252 (VLSS…AFIV), and 457 to 472 (TFAL…HGAR).

Belongs to the PsbB/PsbC family. PsbB subfamily. In terms of assembly, PSII is composed of 1 copy each of membrane proteins PsbA, PsbB, PsbC, PsbD, PsbE, PsbF, PsbH, PsbI, PsbJ, PsbK, PsbL, PsbM, PsbT, PsbX, PsbY, PsbZ, Psb30/Ycf12, at least 3 peripheral proteins of the oxygen-evolving complex and a large number of cofactors. It forms dimeric complexes. It depends on Binds multiple chlorophylls. PSII binds additional chlorophylls, carotenoids and specific lipids. as a cofactor.

Its subcellular location is the plastid. The protein resides in the chloroplast thylakoid membrane. Its function is as follows. One of the components of the core complex of photosystem II (PSII). It binds chlorophyll and helps catalyze the primary light-induced photochemical processes of PSII. PSII is a light-driven water:plastoquinone oxidoreductase, using light energy to abstract electrons from H(2)O, generating O(2) and a proton gradient subsequently used for ATP formation. The sequence is that of Photosystem II CP47 reaction center protein from Welwitschia mirabilis (Tree tumbo).